The primary structure comprises 411 residues: MSAVSESVLSLSRYYLPVYRPCQVVLVRGQGSRVWDEQGRDYLDLAAGIAVCCLGHCDPDLVAALVEQAGRLWHTSNVFYSEPSLRLAQELVDVSRFAERVFLCSSGTEANEAAIKLVRKWAAAQGRLPEHRTIVTFHGSFHGRTLAAVTATAQPKYQEGYEPLPGGFRYVDFNHIEALEAAMVGGDVAAVMLEPIQGEGGVMPVVSGYLAQVRALCDRYGALLVLDEIQCGMGRTGTLFAYWQEEVVPDIVTLAKGLGGGFPIGAMLAGPKVAEVMQFGAHGTTFGGNPMAAAVARVALRKLASVEIAANVQRQSVALRAGLEEISEAFGGVFTQVRGRGLMLGAVLAPLYAGQASAILEVAVEHGVLLLQAGPDVLRFVPALNVSDEELADGLVRLRAALGDYVSRFGG.

Pyridoxal 5'-phosphate-binding positions include Gly107–Thr108 and Phe141. Arg144 is a binding site for N(2)-acetyl-L-ornithine. Asp227–Gln230 is a pyridoxal 5'-phosphate binding site. Position 256 is an N6-(pyridoxal phosphate)lysine (Lys256). Residue Thr284 participates in N(2)-acetyl-L-ornithine binding. Thr285 provides a ligand contact to pyridoxal 5'-phosphate.

This sequence belongs to the class-III pyridoxal-phosphate-dependent aminotransferase family. ArgD subfamily. As to quaternary structure, homodimer. The cofactor is pyridoxal 5'-phosphate.

The protein localises to the cytoplasm. It catalyses the reaction N(2)-acetyl-L-ornithine + 2-oxoglutarate = N-acetyl-L-glutamate 5-semialdehyde + L-glutamate. It functions in the pathway amino-acid biosynthesis; L-arginine biosynthesis; N(2)-acetyl-L-ornithine from L-glutamate: step 4/4. The protein is Acetylornithine aminotransferase of Xylella fastidiosa (strain 9a5c).